We begin with the raw amino-acid sequence, 269 residues long: JmjC domain-containing protein 8 (269 aa).

An N-terminal signal peptide occupies residues 1-24 (MAAAGRRGLLLLFVLWMMVTVILP). N-linked (GlcNAc...) asparagine glycosylation is found at N135, N145, and N214. In terms of domain architecture, JmjC spans 136-269 (DTLYFFGDNN…TSVFISTFLG (134 aa)).

Oligomer. Dimer. Interacts with PKM; regulates angiogenesis and metabolism. In terms of processing, N-glycosylated.

The protein resides in the endoplasmic reticulum lumen. The protein localises to the cytoplasm. Functionally, functions as a positive regulator of TNF-induced NF-kappaB signaling. Regulates angiogenesis and cellular metabolism through interaction with PKM. This is JmjC domain-containing protein 8 from Mus musculus (Mouse).